The sequence spans 264 residues: GTP cyclohydrolase FolE2 (264 aa).

This sequence belongs to the GTP cyclohydrolase IV family.

The enzyme catalyses GTP + H2O = 7,8-dihydroneopterin 3'-triphosphate + formate + H(+). The protein operates within cofactor biosynthesis; 7,8-dihydroneopterin triphosphate biosynthesis; 7,8-dihydroneopterin triphosphate from GTP: step 1/1. In terms of biological role, converts GTP to 7,8-dihydroneopterin triphosphate. The protein is GTP cyclohydrolase FolE2 of Vesicomyosocius okutanii subsp. Calyptogena okutanii (strain HA).